The primary structure comprises 188 residues: Translocon-associated protein subunit beta (188 aa).

The signal sequence occupies residues 1–15; that stretch reads MKFSLFALLFVVVSC. At 16–151 the chain is on the lumenal side; that stretch reads VDVGTQTRDA…EYDRRFAPKY (136 aa). 2 N-linked (GlcNAc...) asparagine glycosylation sites follow: N93 and N109. The chain crosses the membrane as a helical span at residues 152 to 172; sequence TYFLVFFLIVAPTTLGSFLLF. Over 173–188 the chain is Cytoplasmic; that stretch reads QQSKARFPNVIKKKST.

The protein belongs to the TRAP-beta family. Heterotetramer of TRAP-alpha, TRAP-beta, TRAP-delta and TRAP-gamma.

It is found in the endoplasmic reticulum membrane. TRAP proteins are part of a complex whose function is to bind calcium to the ER membrane and thereby regulate the retention of ER resident proteins. The polypeptide is Translocon-associated protein subunit beta (Caenorhabditis elegans).